Consider the following 419-residue polypeptide: Tryptophan synthase beta chain (419 aa).

An N6-(pyridoxal phosphate)lysine modification is found at Lys-98.

This sequence belongs to the TrpB family. In terms of assembly, tetramer of two alpha and two beta chains. The cofactor is pyridoxal 5'-phosphate.

The catalysed reaction is (1S,2R)-1-C-(indol-3-yl)glycerol 3-phosphate + L-serine = D-glyceraldehyde 3-phosphate + L-tryptophan + H2O. The protein operates within amino-acid biosynthesis; L-tryptophan biosynthesis; L-tryptophan from chorismate: step 5/5. Functionally, the beta subunit is responsible for the synthesis of L-tryptophan from indole and L-serine. In Ruegeria sp. (strain TM1040) (Silicibacter sp.), this protein is Tryptophan synthase beta chain.